The primary structure comprises 597 residues: Golgin subfamily A member 8C (597 aa).

Disordered stretches follow at residues 1-80 (MAEE…VPDS) and 96-120 (KQQKKQVEHQLEEEKKANNEKQKAE). Over residues 38-50 (TNGSIHETATSGG) the composition is skewed to polar residues. A compositionally biased stretch (low complexity) spans 53–70 (SPGDSSSTSSSLHAPQSP). Coiled-coil stretches lie at residues 81–141 (RSVK…NTDL), 199–255 (EWKL…SQEV), and 296–394 (SEVE…GKRL). Residues 100–120 (KQVEHQLEEEKKANNEKQKAE) are compositionally biased toward basic and acidic residues. 3 disordered regions span residues 390–422 (LGKRLAHPVASAQKEPEAAVPAPGPGGESSGFM), 457–498 (PITK…GVAA), and 549–576 (PVQGETREGSPHDKPTAQPIVQDHQEHP). A compositionally biased stretch (gly residues) spans 470 to 483 (PGGGHHQAGPGQGG). Residues 553–563 (ETREGSPHDKP) show a composition bias toward basic and acidic residues.

It belongs to the GOLGA8 family.

This is Golgin subfamily A member 8C (GOLGA8CP) from Homo sapiens (Human).